The following is a 250-amino-acid chain: Large ribosomal subunit protein uL4 (250 aa).

Disordered stretches follow at residues 1 to 20 and 51 to 101; these read MQVT…DLPR and YAGL…HGLD. Over residues 92 to 101 the composition is skewed to basic and acidic residues; sequence PKAEKDHGLD.

Belongs to the universal ribosomal protein uL4 family. In terms of assembly, part of the 50S ribosomal subunit.

In terms of biological role, one of the primary rRNA binding proteins, this protein initially binds near the 5'-end of the 23S rRNA. It is important during the early stages of 50S assembly. It makes multiple contacts with different domains of the 23S rRNA in the assembled 50S subunit and ribosome. Its function is as follows. Forms part of the polypeptide exit tunnel. This Halobacterium salinarum (strain ATCC 29341 / DSM 671 / R1) protein is Large ribosomal subunit protein uL4.